Reading from the N-terminus, the 200-residue chain is Late protein I196L (200 aa).

Repeat copies occupy residues 28–48 (SNSL…PTTS) and 49–69 (SNSL…PTTS). Residues 70–91 (SNYLTSAISTNISDKEEDTPFS) form a 3; approximate repeat.

The protein belongs to the asfivirus I196L family.

The protein is Late protein I196L of African swine fever virus (isolate Tick/South Africa/Pretoriuskop Pr4/1996) (ASFV).